A 66-amino-acid polypeptide reads, in one-letter code: Large ribosomal subunit protein bL35 (66 aa).

This sequence belongs to the bacterial ribosomal protein bL35 family. As to quaternary structure, part of the 50S ribosomal subunit. Contacts proteins L15 and L33.

Functionally, binds the 23S rRNA. The chain is Large ribosomal subunit protein bL35 (rpmI) from Deinococcus radiodurans (strain ATCC 13939 / DSM 20539 / JCM 16871 / CCUG 27074 / LMG 4051 / NBRC 15346 / NCIMB 9279 / VKM B-1422 / R1).